The primary structure comprises 278 residues: HTH-type transcriptional activator RhaS (278 aa).

Residues 174 to 272 (NHLIAWLEDH…GWSPREIRQG (99 aa)) enclose the HTH araC/xylS-type domain. 2 DNA-binding regions (H-T-H motif) span residues 191–212 (EAIA…KQHT) and 239–262 (VTHI…RREF).

In terms of assembly, binds DNA as a dimer.

The protein localises to the cytoplasm. In terms of biological role, activates expression of the rhaBAD and rhaT operons. The sequence is that of HTH-type transcriptional activator RhaS from Escherichia fergusonii (strain ATCC 35469 / DSM 13698 / CCUG 18766 / IAM 14443 / JCM 21226 / LMG 7866 / NBRC 102419 / NCTC 12128 / CDC 0568-73).